The primary structure comprises 1187 residues: Trafficking protein particle complex II-specific subunit 120 homolog (1187 aa).

The disordered stretch occupies residues 1037-1059 (GTTAKTDSSKEPGDGSSRSADES).

It belongs to the TRS120 family. In terms of assembly, part of the multisubunit TRAPP (transport protein particle) II complex composed of BET3, BET5, TRS20, TRS23, TRS31, TRS33, TRS65, TRS85, TRS120 and TRS130.

It is found in the golgi apparatus. It localises to the trans-Golgi network. The protein localises to the early endosome. Its function is as follows. Specific subunit of the TRAPP II complex, a highly conserved vesicle tethering complex that is required for the proper transport of proteins in post-Golgi trafficking pathways to the growing cell plate in mitotic active cells. This Oryza sativa subsp. japonica (Rice) protein is Trafficking protein particle complex II-specific subunit 120 homolog.